The following is a 137-amino-acid chain: Large ribosomal subunit protein uL16 (137 aa).

The segment covering 1-17 (MLQPKRTKFRKQMKGRN) has biased composition (basic residues). Residues 1-22 (MLQPKRTKFRKQMKGRNRGLAQ) form a disordered region.

It belongs to the universal ribosomal protein uL16 family. As to quaternary structure, part of the 50S ribosomal subunit.

In terms of biological role, binds 23S rRNA and is also seen to make contacts with the A and possibly P site tRNAs. This chain is Large ribosomal subunit protein uL16, found in Teredinibacter turnerae (strain ATCC 39867 / T7901).